A 1151-amino-acid chain; its full sequence is Calcium-activated potassium channel subunit alpha-1 (1151 aa).

Positions 1-36 (MSSNIHANHLSLDASSSSSSSSSSSSSSSSSSSVHE) are disordered. Residues 1–59 (MSSNIHANHLSLDASSSSSSSSSSSSSSSSSSSVHEPKMDALIIPVTMEVPCDSRGQRM) are Extracellular-facing. Residues 15 to 33 (SSSSSSSSSSSSSSSSSSS) are compositionally biased toward low complexity. Residues 60-80 (WWAFLASSMVTFFGGLFIILL) form a helical membrane-spanning segment. At 81–151 (WRTLKYLWTV…MISAQTLTGR (71 aa)) the chain is on the cytoplasmic side. 3 S-palmitoyl cysteine lipidation sites follow: Cys91, Cys92, and Cys94. Residues 152–172 (VLVVLVFALSIGALVIYFIDS) form a helical membrane-spanning segment. The Extracellular portion of the chain corresponds to 173–187 (SNPIESCQNFYKDFT). A helical membrane pass occupies residues 188–208 (LQIDMAFNVFFLLYFGLRFIA). The Cytoplasmic segment spans residues 209–212 (ANDK). A helical transmembrane segment spans residues 213 to 233 (LWFWLEVNSVVDFFTVPPVFV). Residues 234–237 (SVYL) lie on the Extracellular side of the membrane. Residues 238-258 (NRSWLGLRFLRALRLIQFSEI) traverse the membrane as a helical; Voltage-sensor segment. Residues 259-273 (LQFLNILKTSNSIKL) lie on the Cytoplasmic side of the membrane. Residues 274-294 (VNLLSIFISTWLTAAGFIHLV) traverse the membrane as a helical segment. Residues 295-308 (ENSGDPWENFQNNQ) are Extracellular-facing. Residues 309–331 (ALTYWECVYLLMVTMSTVGYGDV) constitute an intramembrane region (pore-forming). Residues 325–328 (TVGY) carry the Selectivity for potassium motif. Residues 332–340 (YAKTTLGRL) are Extracellular-facing. The chain crosses the membrane as a helical span at residues 341–361 (FMVFFILGGLAMFASYVPEII). Residues 362–1151 (ELIGNRKKYG…KQKYVQEERL (790 aa)) are Cytoplasmic-facing. An RCK N-terminal 1 domain is found at 380-522 (RKHIVVCGHI…WNWKEGDDAI (143 aa)). Glu412, Gln435, and Glu437 together coordinate Mg(2+). The tract at residues 529-549 (LGFIAQSCLAQGLSTMLANLF) is segment S7. The tract at residues 586–606 (LSFPTVCELCFVKLKLLMIAI) is segment S8. The interval 650–654 (CKACH) is heme-binding motif. Positions 674–702 (EQPSTLSPKKKQRNGGMRNSPNSSPKLMR) are disordered. Position 678 is a phosphothreonine (Thr678). 3 positions are modified to phosphoserine: Ser680, Ser693, and Ser697. Positions 752–772 (VLSGHVVVCIFGDVSSALIGL) are segment S9. One can recognise an RCK N-terminal 2 domain in the interval 754–898 (SGHVVVCIFG…MDRSSPDNSP (145 aa)). The residue at position 885 (Thr885) is a Phosphothreonine. Residues Ser893 and Ser897 each carry the phosphoserine modification. Positions 918-940 (TELVNDTNVQFLDQDDDDDPDTE) match the Calcium bowl motif. Residues Gln927, Asp930, Asp933, and Asp935 each coordinate Ca(2+). The segment S10 stretch occupies residues 947-967 (FACGTAFAVSVLDSLMSATYF). Over residues 1101-1126 (RASLSHSSHSSQSSSKKSSSVHSIPS) the composition is skewed to low complexity. The disordered stretch occupies residues 1101-1151 (RASLSHSSHSSQSSSKKSSSVHSIPSTANRQNRPKSRESRDKQKYVQEERL). Over residues 1135-1151 (KSRESRDKQKYVQEERL) the composition is skewed to basic and acidic residues. A phosphoserine mark is found at Ser1136 and Ser1139.

This sequence belongs to the potassium channel family. Calcium-activated (TC 1.A.1.3) subfamily. KCa1.1/KCNMA1 sub-subfamily. In terms of assembly, homotetramer; which constitutes the calcium-activated potassium channel. Interacts with beta subunits KCNMB1, KCNMB2, KCNMB3 and KCNMB4. Interacts with gamma subunits LRRC26, LRRC38, LRRC52 and LRRC55. Beta and gamma subunits are accessory, and modulate its activity. Interacts with RAB11B. In terms of processing, phosphorylated. Phosphorylation by kinases such as PKA and/or PKG. In smooth muscles, phosphorylation affects its activity. Palmitoylation by ZDHHC22 and ZDHHC23 within the intracellular linker between the S0 and S1 transmembrane domains regulates localization to the plasma membrane. Depalmitoylated by LYPLA1 and LYPLAL1, leading to retard exit from the trans-Golgi network.

The protein resides in the cell membrane. It carries out the reaction K(+)(in) = K(+)(out). With respect to regulation, ethanol and carbon monoxide-bound heme increase channel activation. Heme inhibits channel activation. Potassium channel activated by both membrane depolarization or increase in cytosolic Ca(2+) that mediates export of K(+). It is also activated by the concentration of cytosolic Mg(2+). Its activation dampens the excitatory events that elevate the cytosolic Ca(2+) concentration and/or depolarize the cell membrane. It therefore contributes to repolarization of the membrane potential. Plays a key role in controlling excitability in a number of systems, such as regulation of the contraction of smooth muscle, the tuning of hair cells in the cochlea, regulation of transmitter release, and innate immunity. In smooth muscles, its activation by high level of Ca(2+), caused by ryanodine receptors in the sarcoplasmic reticulum, regulates the membrane potential. In cochlea cells, its number and kinetic properties partly determine the characteristic frequency of each hair cell and thereby helps to establish a tonotopic map. Kinetics of KCNMA1 channels are determined by alternative splicing, phosphorylation status and its combination with modulating beta subunits. Highly sensitive to both iberiotoxin (IbTx) and charybdotoxin (CTX). The polypeptide is Calcium-activated potassium channel subunit alpha-1 (KCNMA1) (Macaca mulatta (Rhesus macaque)).